The following is a 531-amino-acid chain: Peptide chain release factor 3 (531 aa).

Residues 10 to 278 (RRRRTFAIIS…SLIDWAPAPK (269 aa)) form the tr-type G domain. GTP contacts are provided by residues 19 to 26 (SHPDAGKT), 87 to 91 (DTPGH), and 141 to 144 (NKYD).

Belongs to the TRAFAC class translation factor GTPase superfamily. Classic translation factor GTPase family. PrfC subfamily.

It is found in the cytoplasm. Functionally, increases the formation of ribosomal termination complexes and stimulates activities of RF-1 and RF-2. It binds guanine nucleotides and has strong preference for UGA stop codons. It may interact directly with the ribosome. The stimulation of RF-1 and RF-2 is significantly reduced by GTP and GDP, but not by GMP. In Neisseria gonorrhoeae (strain NCCP11945), this protein is Peptide chain release factor 3.